The sequence spans 242 residues: Segregation and condensation protein A (242 aa).

Belongs to the ScpA family. In terms of assembly, component of a cohesin-like complex composed of ScpA, ScpB and the Smc homodimer, in which ScpA and ScpB bind to the head domain of Smc. The presence of the three proteins is required for the association of the complex with DNA.

Its subcellular location is the cytoplasm. Functionally, participates in chromosomal partition during cell division. May act via the formation of a condensin-like complex containing Smc and ScpB that pull DNA away from mid-cell into both cell halves. The chain is Segregation and condensation protein A from Streptococcus mitis.